We begin with the raw amino-acid sequence, 244 residues long: MKFEALIGLVLVFLSEHAGVYSAKFTFTNKCPNTVWPGTLTGGGGPQLLSTGFELASGASTSLTVQAPWSGRFWGRSHCSIDSSGKFKCSTGDCGSGQISCNGAGASPPASLVELTLATNGGQDFYDVSLVDGFNLPIKLAPRGGSGDCNSTSCAANINTVCPAELSDKGSDGSVIGCKSACLALNQPQYCCTGAYGTPDTCPPTDFSKVFKNQCPQAYSYAYDDKSSTFTCFGGPNYEITFCP.

Positions 1–22 (MKFEALIGLVLVFLSEHAGVYS) are cleaved as a signal peptide. Disulfide bonds link Cys31–Cys243, Cys79–Cys89, Cys94–Cys101, Cys149–Cys232, Cys154–Cys215, Cys162–Cys178, Cys182–Cys191, and Cys192–Cys202. N-linked (GlcNAc...) asparagine glycosylation occurs at Asn150.

The protein belongs to the thaumatin family. N-glycosylated. In terms of tissue distribution, style.

The protein localises to the secreted. The polypeptide is Thaumatin-like protein 1 (TL1) (Pyrus pyrifolia (Chinese pear)).